The primary structure comprises 101 residues: Chaperone modulatory protein CbpM (101 aa).

This sequence belongs to the CbpM family.

Functionally, interacts with CbpA and inhibits both the DnaJ-like co-chaperone activity and the DNA binding activity of CbpA. Together with CbpA, modulates the activity of the DnaK chaperone system. Does not inhibit the co-chaperone activity of DnaJ. In Pseudomonas putida (strain GB-1), this protein is Chaperone modulatory protein CbpM.